Consider the following 197-residue polypeptide: Inner membrane protein p54 (197 aa).

A helical transmembrane segment spans residues 32 to 52 (YTILIAIVVLVIIIIVLIYLF). The tract at residues 84–123 (PQPGTSKPAGATTASVGKPVTGRPATNRPVTDRPATNNPV) is disordered. A run of 4 repeats spans residues 139–142 (AAAS), 143–146 (AAAS), 147–150 (AAAS), and 151–154 (AAAS). The 4 X 4 AA tandem repeats of A-A-A-S stretch occupies residues 139 to 154 (AAASAAASAAASAAAS). The interaction with host DYNLL1 stretch occupies residues 163–175 (YTTVTTQNTASQT).

It belongs to the asfivirus envelope protein p54 family. In terms of assembly, interacts with the host light chain cytoplasmic dynein DYNLL1; this interaction is critical for intracellular microtubule-dependent virus transport toward viral factories.

The protein localises to the virion membrane. The protein resides in the host cytoplasm. It is found in the host cytoskeleton. It localises to the host endoplasmic reticulum membrane. Functionally, inner envelope protein involved, through its interaction with host dynein, in the intracellular microtubule-dependent transport of viral capsid toward viral factories. Seems to induce caspase-3 activation and apoptosis. Plays a role in virion morphogenesis by recruiting and transforming the host ER membranes into the precursors of the viral envelope. Involved in virus attachment to the host cell. The polypeptide is Inner membrane protein p54 (African swine fever virus (isolate Tick/South Africa/Pretoriuskop Pr4/1996) (ASFV)).